The following is a 232-amino-acid chain: uncharacterized protein (232 aa).

5 consecutive transmembrane segments (helical) span residues 4 to 24 (LLGV…YVFE), 42 to 62 (VLVG…LAVL), 100 to 120 (LFFI…ILHM), 145 to 165 (LAFV…FFTL), and 171 to 191 (GNLI…WVGF).

The protein resides in the cell membrane. This is an uncharacterized protein from Aquifex aeolicus (strain VF5).